The chain runs to 78 residues: Acyl carrier protein (78 aa).

The Carrier domain maps to 2–77; the sequence is STIEERVKKI…AAIDYVKAHQ (76 aa). Residue S37 is modified to O-(pantetheine 4'-phosphoryl)serine.

This sequence belongs to the acyl carrier protein (ACP) family. In terms of processing, 4'-phosphopantetheine is transferred from CoA to a specific serine of apo-ACP by AcpS. This modification is essential for activity because fatty acids are bound in thioester linkage to the sulfhydryl of the prosthetic group.

It is found in the cytoplasm. Its pathway is lipid metabolism; fatty acid biosynthesis. Functionally, carrier of the growing fatty acid chain in fatty acid biosynthesis. This is Acyl carrier protein from Pseudomonas putida (strain ATCC 700007 / DSM 6899 / JCM 31910 / BCRC 17059 / LMG 24140 / F1).